The sequence spans 262 residues: Cytochrome c oxidase subunit 3 (262 aa).

A run of 7 helical transmembrane segments spans residues 11–31 (LVEP…LTVG), 32–52 (LVMW…VMIV), 83–103 (GMVL…WAFF), 125–147 (LNAF…TVTW), 160–180 (AIQS…LQAW), 198–218 (FFVA…FLMV), and 240–260 (AWYW…IYWW).

It belongs to the cytochrome c oxidase subunit 3 family. Component of the cytochrome c oxidase (complex IV, CIV), a multisubunit enzyme composed of a catalytic core of 3 subunits and several supernumerary subunits. The complex exists as a monomer or a dimer and forms supercomplexes (SCs) in the inner mitochondrial membrane with ubiquinol-cytochrome c oxidoreductase (cytochrome b-c1 complex, complex III, CIII).

It localises to the mitochondrion inner membrane. It carries out the reaction 4 Fe(II)-[cytochrome c] + O2 + 8 H(+)(in) = 4 Fe(III)-[cytochrome c] + 2 H2O + 4 H(+)(out). Component of the cytochrome c oxidase, the last enzyme in the mitochondrial electron transport chain which drives oxidative phosphorylation. The respiratory chain contains 3 multisubunit complexes succinate dehydrogenase (complex II, CII), ubiquinol-cytochrome c oxidoreductase (cytochrome b-c1 complex, complex III, CIII) and cytochrome c oxidase (complex IV, CIV), that cooperate to transfer electrons derived from NADH and succinate to molecular oxygen, creating an electrochemical gradient over the inner membrane that drives transmembrane transport and the ATP synthase. Cytochrome c oxidase is the component of the respiratory chain that catalyzes the reduction of oxygen to water. Electrons originating from reduced cytochrome c in the intermembrane space (IMS) are transferred via the dinuclear copper A center (CU(A)) of subunit 2 and heme A of subunit 1 to the active site in subunit 1, a binuclear center (BNC) formed by heme A3 and copper B (CU(B)). The BNC reduces molecular oxygen to 2 water molecules using 4 electrons from cytochrome c in the IMS and 4 protons from the mitochondrial matrix. This is Cytochrome c oxidase subunit 3 (COIII) from Branchiostoma floridae (Florida lancelet).